We begin with the raw amino-acid sequence, 561 residues long: Carboxylesterase 1E (561 aa).

The N-terminal stretch at 1-18 (MCLYALILVFLAAFTAGG) is a signal peptide. Residues Asn79 and Asn107 are each glycosylated (N-linked (GlcNAc...) asparagine). Cysteines 87 and 116 form a disulfide. The active-site Acyl-ester intermediate is Ser221. The cysteines at positions 273 and 284 are disulfide-linked. Residues Glu353 and His466 each act as charge relay system in the active site. Asn489 carries an N-linked (GlcNAc...) asparagine glycan. The Prevents secretion from ER signature appears at 558 to 561 (HTEL).

Belongs to the type-B carboxylesterase/lipase family. Expressed in liver.

The protein resides in the endoplasmic reticulum lumen. Its subcellular location is the microsome membrane. It catalyses the reaction a carboxylic ester + H2O = an alcohol + a carboxylate + H(+). It carries out the reaction all-trans-retinyl hexadecanoate + H2O = all-trans-retinol + hexadecanoate + H(+). Functionally, involved in the detoxification of xenobiotics and in the activation of ester and amide prodrugs. Hydrolyzes retinyl esters. In Rattus norvegicus (Rat), this protein is Carboxylesterase 1E (Ces1e).